The chain runs to 93 residues: Putative pterin-4-alpha-carbinolamine dehydratase (93 aa).

It belongs to the pterin-4-alpha-carbinolamine dehydratase family.

The catalysed reaction is (4aS,6R)-4a-hydroxy-L-erythro-5,6,7,8-tetrahydrobiopterin = (6R)-L-erythro-6,7-dihydrobiopterin + H2O. This chain is Putative pterin-4-alpha-carbinolamine dehydratase, found in Trichormus variabilis (strain ATCC 29413 / PCC 7937) (Anabaena variabilis).